Consider the following 124-residue polypeptide: S-adenosylmethionine decarboxylase proenzyme (124 aa).

Catalysis depends on Ser-63, which acts as the Schiff-base intermediate with substrate; via pyruvic acid. The residue at position 63 (Ser-63) is a Pyruvic acid (Ser); by autocatalysis. His-68 acts as the Proton acceptor; for processing activity in catalysis. Cys-83 serves as the catalytic Proton donor; for catalytic activity.

This sequence belongs to the prokaryotic AdoMetDC family. Type 1 subfamily. Heterotetramer of two alpha and two beta chains arranged as a dimer of alpha/beta heterodimers. The cofactor is pyruvate. Is synthesized initially as an inactive proenzyme. Formation of the active enzyme involves a self-maturation process in which the active site pyruvoyl group is generated from an internal serine residue via an autocatalytic post-translational modification. Two non-identical subunits are generated from the proenzyme in this reaction, and the pyruvate is formed at the N-terminus of the alpha chain, which is derived from the carboxyl end of the proenzyme. The post-translation cleavage follows an unusual pathway, termed non-hydrolytic serinolysis, in which the side chain hydroxyl group of the serine supplies its oxygen atom to form the C-terminus of the beta chain, while the remainder of the serine residue undergoes an oxidative deamination to produce ammonia and the pyruvoyl group blocking the N-terminus of the alpha chain.

The enzyme catalyses S-adenosyl-L-methionine + H(+) = S-adenosyl 3-(methylsulfanyl)propylamine + CO2. It functions in the pathway amine and polyamine biosynthesis; S-adenosylmethioninamine biosynthesis; S-adenosylmethioninamine from S-adenosyl-L-methionine: step 1/1. Catalyzes the decarboxylation of S-adenosylmethionine to S-adenosylmethioninamine (dcAdoMet), the propylamine donor required for the synthesis of the polyamines spermine and spermidine from the diamine putrescine. The chain is S-adenosylmethionine decarboxylase proenzyme from Anoxybacillus flavithermus (strain DSM 21510 / WK1).